The chain runs to 203 residues: MSEILELEAESRTEFGTGAARALRRAGRVPAIIYGAGKTPVSISLEEKEITKYYRKPAFISQLINLTIDKKKYKVLPKAVELHPVTDIVRHVDFVFLEKKTQKMEVPVVYEGKERALGVKRGGYFNIVKRRVTLLCDVNNIPRNITIDVTNMPMATSLKSSKIELPKGCSFVTKKEFVLATIIGRRGAKTEAEGEQQAAEAGK.

It belongs to the bacterial ribosomal protein bL25 family. CTC subfamily. As to quaternary structure, part of the 50S ribosomal subunit; part of the 5S rRNA/L5/L18/L25 subcomplex. Contacts the 5S rRNA. Binds to the 5S rRNA independently of L5 and L18.

This is one of the proteins that binds to the 5S RNA in the ribosome where it forms part of the central protuberance. This Rickettsia rickettsii (strain Iowa) protein is Large ribosomal subunit protein bL25.